Here is a 218-residue protein sequence, read N- to C-terminus: MSQVIRTLALTGLALAGLSGCVSVPRGQGGAAPAVVGQVSESAQQAETARQAWLQAHPAWSFQGRVAISKGRDGGSGRLDWQQDGPRYHVQLSAPVTRQSWVLTGDTTTGAGRLEGLDGGPRAGADAEQVLLEATGWTIPVNQMPDWVRALRIADAGAARVDLDEHGRPRTVQQDGWTIDFLEWTPASAAQPELPRRIEARNGDAKVRLLVDQWTLSP.

The first 20 residues, 1–20, serve as a signal peptide directing secretion; it reads MSQVIRTLALTGLALAGLSG. C21 is lipidated: N-palmitoyl cysteine. C21 carries S-diacylglycerol cysteine lipidation.

This sequence belongs to the LolB family. In terms of assembly, monomer.

It is found in the cell outer membrane. Functionally, plays a critical role in the incorporation of lipoproteins in the outer membrane after they are released by the LolA protein. In Xanthomonas campestris pv. campestris (strain 8004), this protein is Outer-membrane lipoprotein LolB.